The sequence spans 177 residues: Calerythrin (177 aa).

4 consecutive EF-hand domains span residues 5–40, 45–90, 100–134, and 134–169; these read IASD…IAEA, AGAA…NLIF, VLGP…ALGM, and MSKA…FHFG. The Ca(2+) site is built by Asp-18, Asp-20, Asn-22, and Asp-29. Ca(2+) is bound by residues Asp-113, Asn-115, Asp-117, Gln-119, Glu-124, Asp-147, Asn-149, Asn-151, Glu-153, and Glu-158.

The polypeptide is Calerythrin (Saccharopolyspora erythraea (Streptomyces erythraeus)).